The primary structure comprises 514 residues: 2,3-bisphosphoglycerate-independent phosphoglycerate mutase (514 aa).

Residues Asp-13 and Ser-69 each contribute to the Mn(2+) site. Ser-69 serves as the catalytic Phosphoserine intermediate. Substrate-binding positions include His-128, 158–159 (RD), Arg-189, Arg-195, 263–266 (RADR), and Lys-336. Positions 402, 406, 443, 444, and 461 each coordinate Mn(2+).

This sequence belongs to the BPG-independent phosphoglycerate mutase family. As to quaternary structure, monomer. It depends on Mn(2+) as a cofactor.

It carries out the reaction (2R)-2-phosphoglycerate = (2R)-3-phosphoglycerate. It participates in carbohydrate degradation; glycolysis; pyruvate from D-glyceraldehyde 3-phosphate: step 3/5. Catalyzes the interconversion of 2-phosphoglycerate and 3-phosphoglycerate. The sequence is that of 2,3-bisphosphoglycerate-independent phosphoglycerate mutase from Akkermansia muciniphila (strain ATCC BAA-835 / DSM 22959 / JCM 33894 / BCRC 81048 / CCUG 64013 / CIP 107961 / Muc).